Reading from the N-terminus, the 492-residue chain is MPLYSSQPLKIYNSLSGEKENFKPIHEGNVGMYVCGPTVYSNVHLGNVRTFMSFDVIFRYFLHLDYKVRYVRNITDVGHIVDDVDEGEDKIAKKARLEQLEPMEVVQRYTVDFHDILKAFNFLPPSIEPTATGHIIEQIEIIKKIIDTGIGYEANGSVYFDVVKYNETNNYGVLSGRNIEDMLANTRDLDGQSDKRNPQDFALWKKAEPEHIMRWPSPWSDGFPGWHLECTAMSTKYLGNHFDIHGGGMDLKFPHHECEIAQNEACTGQSPVNYWMHTNMLTLNGKKMAKSTGNNILPGEILSGDNTILSKAFSASVTRFFMLQAHYRSILDFSDDAITAAEKGYKRLMEALEALPAIKAGSSSSVDFAAWKQACYDAMNDDFNTPILIAQLFEAVRYINLLKEGKETISAEDLKSFSTAINAFVFDVLGLSDEKAADGNNDKLEGVVNMLIGMRNQARADKNFALSDQIRDQLIALGIQLKDGKEGTSFSI.

Position 35 (C35) interacts with Zn(2+). The 'HIGH' region motif lies at 37–47; it reads PTVYSNVHLGN. 3 residues coordinate Zn(2+): C230, H255, and E259. The 'KMSKS' region motif lies at 287 to 291; it reads KMAKS. K290 provides a ligand contact to ATP.

Belongs to the class-I aminoacyl-tRNA synthetase family. In terms of assembly, monomer. Requires Zn(2+) as cofactor.

The protein localises to the cytoplasm. It catalyses the reaction tRNA(Cys) + L-cysteine + ATP = L-cysteinyl-tRNA(Cys) + AMP + diphosphate. The sequence is that of Cysteine--tRNA ligase from Flavobacterium johnsoniae (strain ATCC 17061 / DSM 2064 / JCM 8514 / BCRC 14874 / CCUG 350202 / NBRC 14942 / NCIMB 11054 / UW101) (Cytophaga johnsonae).